A 182-amino-acid chain; its full sequence is uncharacterized protein (182 aa).

BNR repeat units lie at residues 58–69 and 102–113; these read WISFDAGENWET and YITDDRGESWRA.

This is an uncharacterized protein from Saccharomyces cerevisiae (strain ATCC 204508 / S288c) (Baker's yeast).